The sequence spans 328 residues: Palmitoyltransferase ZDHHC15A (328 aa).

At M1–L14 the chain is on the cytoplasmic side. The helical transmembrane segment at F15 to V35 threads the bilayer. The Lumenal segment spans residues H36–R48. Residues V49–A69 form a helical membrane-spanning segment. At V70–K166 the chain is on the cytoplasmic side. Positions R123–L173 constitute a DHHC domain. Positions 125 and 128 each coordinate Zn(2+). K132 contacts substrate. Zn(2+)-binding residues include H138, C139, C142, C145, and H152. The active-site S-palmitoyl cysteine intermediate is C153. C159 serves as a coordination point for Zn(2+). A helical transmembrane segment spans residues F167–T187. Residues P188 to H206 are Lumenal-facing. The helical transmembrane segment at V207 to F227 threads the bilayer. The Cytoplasmic portion of the chain corresponds to H228–D328.

Belongs to the DHHC palmitoyltransferase family. In terms of processing, autopalmitoylated (in vitro).

It is found in the golgi apparatus membrane. The protein localises to the postsynaptic density. It catalyses the reaction L-cysteinyl-[protein] + hexadecanoyl-CoA = S-hexadecanoyl-L-cysteinyl-[protein] + CoA. The enzyme catalyses L-cysteinyl-[protein] + tetradecanoyl-CoA = S-tetradecanoyl-L-cysteinyl-[protein] + CoA. It carries out the reaction L-cysteinyl-[protein] + octadecanoyl-CoA = S-octadecanoyl-L-cysteinyl-[protein] + CoA. In terms of biological role, palmitoyltransferase that catalyzes the addition of palmitate onto various protein substrates. Has no stringent fatty acid selectivity and in addition to palmitate can also transfer onto target proteins myristate from tetradecanoyl-CoA and stearate from octadecanoyl-CoA. May thereby regulate target proteins association and localization to membranes. This Danio rerio (Zebrafish) protein is Palmitoyltransferase ZDHHC15A (zdhhc15a).